The sequence spans 208 residues: Small ribosomal subunit protein eS1 (208 aa).

It belongs to the eukaryotic ribosomal protein eS1 family.

In Saccharolobus islandicus (strain Y.N.15.51 / Yellowstone #2) (Sulfolobus islandicus), this protein is Small ribosomal subunit protein eS1.